The sequence spans 181 residues: Protein Abitram (181 aa).

Belongs to the ABITRAM family. Interacts with F-actin. Interacts with G-actin.

Its subcellular location is the nucleus speckle. The protein localises to the cell projection. The protein resides in the lamellipodium. It localises to the nucleus. It is found in the growth cone. Its subcellular location is the dendrite. Functionally, actin-binding protein that regulates actin polymerization, filopodia dynamics and increases the branching of proximal dendrites of developing neurons. This chain is Protein Abitram, found in Homo sapiens (Human).